A 403-amino-acid chain; its full sequence is Subtilisin-like protease CPC735_035780 (403 aa).

Residues 1–19 form the signal peptide; that stretch reads MSIMKIATLFFAALSAVEA. Residues 20 to 117 constitute a propeptide that is removed on maturation; that stretch reads AKLLTPSDKR…VEPDRRVHLT (98 aa). The Inhibitor I9 domain occupies 35-116; that stretch reads SYIVVMKDNV…YVEPDRRVHL (82 aa). The Peptidase S8 domain maps to 127–403; the sequence is SWGLGRISHR…NKLLYNNSGR (277 aa). Active-site charge relay system residues include D159 and H190. Residues N233 and N251 are each glycosylated (N-linked (GlcNAc...) asparagine). The Charge relay system role is filled by S349. N399 is a glycosylation site (N-linked (GlcNAc...) asparagine).

This sequence belongs to the peptidase S8 family.

It is found in the secreted. Secreted subtilisin-like serine protease with keratinolytic activity that contributes to pathogenicity. This Coccidioides posadasii (strain C735) (Valley fever fungus) protein is Subtilisin-like protease CPC735_035780.